The sequence spans 518 residues: GTPase MTG2, mitochondrial (518 aa).

The transit peptide at methionine 1–tyrosine 23 directs the protein to the mitochondrion. Residues glycine 89–isoleucine 339 enclose the Obg domain. Positions alanine 340–arginine 512 constitute an OBG-type G domain. GTP contacts are provided by residues glycine 346–serine 353, aspartate 394–isoleucine 398, and asparagine 460–aspartate 463.

The protein belongs to the TRAFAC class OBG-HflX-like GTPase superfamily. OBG GTPase family. As to quaternary structure, interacts with the mitochondrial 54S large ribosomal subunit.

It is found in the mitochondrion inner membrane. In terms of biological role, required for mitochondrial protein synthesis. May be involved in mitochondrial ribosome biogenesis. The protein is GTPase MTG2, mitochondrial (MTG2) of Saccharomyces cerevisiae (strain ATCC 204508 / S288c) (Baker's yeast).